The sequence spans 449 residues: CCA-adding enzyme (449 aa).

ATP is bound by residues S53 and K56. Residues S53 and K56 each contribute to the CTP site. Residues D65, D67, and D119 each contribute to the Mg(2+) site. H142, K161, and Y170 together coordinate ATP. Positions 142, 161, and 170 each coordinate CTP.

This sequence belongs to the tRNA nucleotidyltransferase/poly(A) polymerase family. Archaeal CCA-adding enzyme subfamily. In terms of assembly, homodimer. The cofactor is Mg(2+).

It carries out the reaction a tRNA precursor + 2 CTP + ATP = a tRNA with a 3' CCA end + 3 diphosphate. The catalysed reaction is a tRNA with a 3' CCA end + 2 CTP + ATP = a tRNA with a 3' CCACCA end + 3 diphosphate. Functionally, catalyzes the addition and repair of the essential 3'-terminal CCA sequence in tRNAs without using a nucleic acid template. Adds these three nucleotides in the order of C, C, and A to the tRNA nucleotide-73, using CTP and ATP as substrates and producing inorganic pyrophosphate. tRNA 3'-terminal CCA addition is required both for tRNA processing and repair. Also involved in tRNA surveillance by mediating tandem CCA addition to generate a CCACCA at the 3' terminus of unstable tRNAs. While stable tRNAs receive only 3'-terminal CCA, unstable tRNAs are marked with CCACCA and rapidly degraded. This is CCA-adding enzyme from Pyrococcus horikoshii (strain ATCC 700860 / DSM 12428 / JCM 9974 / NBRC 100139 / OT-3).